The primary structure comprises 313 residues: N-acetyl-gamma-glutamyl-phosphate reductase 2 (313 aa).

The active site involves Cys-117.

This sequence belongs to the NAGSA dehydrogenase family. Type 2 subfamily.

The protein localises to the cytoplasm. The catalysed reaction is N-acetyl-L-glutamate 5-semialdehyde + phosphate + NADP(+) = N-acetyl-L-glutamyl 5-phosphate + NADPH + H(+). Its pathway is amino-acid biosynthesis; L-arginine biosynthesis; N(2)-acetyl-L-ornithine from L-glutamate: step 3/4. Catalyzes the NADPH-dependent reduction of N-acetyl-5-glutamyl phosphate to yield N-acetyl-L-glutamate 5-semialdehyde. This chain is N-acetyl-gamma-glutamyl-phosphate reductase 2, found in Pseudomonas putida (strain ATCC 47054 / DSM 6125 / CFBP 8728 / NCIMB 11950 / KT2440).